Consider the following 546-residue polypeptide: Glucose-6-phosphate isomerase (546 aa).

Glutamate 353 (proton donor) is an active-site residue. Residues histidine 384 and lysine 512 contribute to the active site.

Belongs to the GPI family.

It is found in the cytoplasm. It carries out the reaction alpha-D-glucose 6-phosphate = beta-D-fructose 6-phosphate. It functions in the pathway carbohydrate biosynthesis; gluconeogenesis. Its pathway is carbohydrate degradation; glycolysis; D-glyceraldehyde 3-phosphate and glycerone phosphate from D-glucose: step 2/4. Functionally, catalyzes the reversible isomerization of glucose-6-phosphate to fructose-6-phosphate. This is Glucose-6-phosphate isomerase from Actinobacillus pleuropneumoniae serotype 3 (strain JL03).